Consider the following 516-residue polypeptide: Anthranilate synthase component 1 (516 aa).

L-tryptophan-binding positions include Ser56 and Pro283–Met285. Gly324–Thr325 is a chorismate binding site. A Mg(2+)-binding site is contributed by Glu351. Residues Tyr439, Arg459, Gly473–Gly475, and Gly475 each bind chorismate. Mg(2+) is bound at residue Glu488.

It belongs to the anthranilate synthase component I family. As to quaternary structure, heterotetramer consisting of two non-identical subunits: a beta subunit (TrpG) and a large alpha subunit (TrpE). It depends on Mg(2+) as a cofactor.

It catalyses the reaction chorismate + L-glutamine = anthranilate + pyruvate + L-glutamate + H(+). Its pathway is amino-acid biosynthesis; L-tryptophan biosynthesis; L-tryptophan from chorismate: step 1/5. Feedback inhibited by tryptophan. Its function is as follows. Part of a heterotetrameric complex that catalyzes the two-step biosynthesis of anthranilate, an intermediate in the biosynthesis of L-tryptophan. In the first step, the glutamine-binding beta subunit (TrpG) of anthranilate synthase (AS) provides the glutamine amidotransferase activity which generates ammonia as a substrate that, along with chorismate, is used in the second step, catalyzed by the large alpha subunit of AS (TrpE) to produce anthranilate. In the absence of TrpG, TrpE can synthesize anthranilate directly from chorismate and high concentrations of ammonia. This Mycobacterium bovis (strain ATCC BAA-935 / AF2122/97) protein is Anthranilate synthase component 1 (trpE).